A 198-amino-acid chain; its full sequence is UDP-N-acetylglucosamine transferase subunit ALG13 (198 aa).

It belongs to the glycosyltransferase 28 family. In terms of assembly, heterodimer with ALG14 to form a functional enzyme.

It localises to the endoplasmic reticulum. It carries out the reaction an N-acetyl-alpha-D-glucosaminyl-diphospho-di-trans,poly-cis-dolichol + UDP-N-acetyl-alpha-D-glucosamine = an N,N'-diacetylchitobiosyl-diphospho-di-trans,poly-cis-dolichol + UDP + H(+). Involved in protein N-glycosylation. Essential for the second step of the dolichol-linked oligosaccharide pathway. This chain is UDP-N-acetylglucosamine transferase subunit ALG13 (ALG13), found in Candida glabrata (strain ATCC 2001 / BCRC 20586 / JCM 3761 / NBRC 0622 / NRRL Y-65 / CBS 138) (Yeast).